The primary structure comprises 337 residues: Tetraacyldisaccharide 4'-kinase (337 aa).

ATP is bound at residue 55–62 (TAGGNGKT).

Belongs to the LpxK family.

The enzyme catalyses a lipid A disaccharide + ATP = a lipid IVA + ADP + H(+). It participates in glycolipid biosynthesis; lipid IV(A) biosynthesis; lipid IV(A) from (3R)-3-hydroxytetradecanoyl-[acyl-carrier-protein] and UDP-N-acetyl-alpha-D-glucosamine: step 6/6. Transfers the gamma-phosphate of ATP to the 4'-position of a tetraacyldisaccharide 1-phosphate intermediate (termed DS-1-P) to form tetraacyldisaccharide 1,4'-bis-phosphate (lipid IVA). The chain is Tetraacyldisaccharide 4'-kinase from Sodalis glossinidius (strain morsitans).